The following is a 144-amino-acid chain: Large ribosomal subunit protein uL11 (144 aa).

Belongs to the universal ribosomal protein uL11 family. As to quaternary structure, part of the ribosomal stalk of the 50S ribosomal subunit. Interacts with L10 and the large rRNA to form the base of the stalk. L10 forms an elongated spine to which L12 dimers bind in a sequential fashion forming a multimeric L10(L12)X complex. Post-translationally, one or more lysine residues are methylated.

In terms of biological role, forms part of the ribosomal stalk which helps the ribosome interact with GTP-bound translation factors. This Granulibacter bethesdensis (strain ATCC BAA-1260 / CGDNIH1) protein is Large ribosomal subunit protein uL11.